The chain runs to 464 residues: Argininosuccinate lyase (464 aa).

Belongs to the lyase 1 family. Argininosuccinate lyase subfamily.

The protein resides in the cytoplasm. The enzyme catalyses 2-(N(omega)-L-arginino)succinate = fumarate + L-arginine. Its pathway is amino-acid biosynthesis; L-arginine biosynthesis; L-arginine from L-ornithine and carbamoyl phosphate: step 3/3. In Azotobacter vinelandii (strain DJ / ATCC BAA-1303), this protein is Argininosuccinate lyase.